Reading from the N-terminus, the 135-residue chain is Large ribosomal subunit protein uL22c (135 aa).

Belongs to the universal ribosomal protein uL22 family. In terms of assembly, part of the 50S ribosomal subunit.

It localises to the plastid. In terms of biological role, this protein binds specifically to 23S rRNA. Its function is as follows. The globular domain of the protein is located near the polypeptide exit tunnel on the outside of the subunit, while an extended beta-hairpin is found that lines the wall of the exit tunnel in the center of the 70S ribosome. This Cuscuta reflexa (Southern Asian dodder) protein is Large ribosomal subunit protein uL22c (rpl22).